A 993-amino-acid polypeptide reads, in one-letter code: Isoleucine--tRNA ligase, mitochondrial (993 aa).

A mitochondrion-targeting transit peptide spans 1–29 (SLWGTPRLPCSPGWQGATKRLLVRSVSGA). Lysine 55 bears the N6-acetyllysine; alternate mark. Lysine 55 is subject to N6-succinyllysine; alternate. The 'HIGH' region motif lies at 97–107 (PYANGDPHVGH). Lysine 170 is modified (N6-acetyllysine). Lysine 175 is subject to N6-succinyllysine. Lysine 214 carries the N6-acetyllysine modification. Position 222 is an N6-acetyllysine; alternate (lysine 222). Lysine 222 bears the N6-succinyllysine; alternate mark. An N6-succinyllysine mark is found at lysine 460 and lysine 481. Residues lysine 645 and lysine 648 each coordinate ATP. Positions 645–649 (KMSKS) match the 'KMSKS' region motif. Residue lysine 706 is modified to N6-acetyllysine. 2 positions are modified to N6-acetyllysine; alternate: lysine 756 and lysine 762. Lysine 756 and lysine 762 each carry N6-succinyllysine; alternate.

Belongs to the class-I aminoacyl-tRNA synthetase family.

It is found in the mitochondrion matrix. The enzyme catalyses tRNA(Ile) + L-isoleucine + ATP = L-isoleucyl-tRNA(Ile) + AMP + diphosphate. Functionally, aminoacyl-tRNA synthetase that catalyzes the specific attachment of isoleucine to its cognate tRNA (tRNA(Ile)). In Macaca fascicularis (Crab-eating macaque), this protein is Isoleucine--tRNA ligase, mitochondrial (IARS2).